Reading from the N-terminus, the 306-residue chain is Ornithine carbamoyltransferase (306 aa).

Residues 46–49, Gln73, Arg97, and 124–127 contribute to the carbamoyl phosphate site; these read STRT and HPTQ. L-ornithine-binding positions include Asn156, Asp220, and 224-225; that span reads SM. Residues 260 to 261 and Arg288 contribute to the carbamoyl phosphate site; that span reads CL.

Belongs to the aspartate/ornithine carbamoyltransferase superfamily. OTCase family.

The protein localises to the cytoplasm. The enzyme catalyses carbamoyl phosphate + L-ornithine = L-citrulline + phosphate + H(+). Its pathway is amino-acid biosynthesis; L-arginine biosynthesis; L-arginine from L-ornithine and carbamoyl phosphate: step 1/3. Functionally, reversibly catalyzes the transfer of the carbamoyl group from carbamoyl phosphate (CP) to the N(epsilon) atom of ornithine (ORN) to produce L-citrulline. In Campylobacter jejuni (strain RM1221), this protein is Ornithine carbamoyltransferase.